Consider the following 253-residue polypeptide: Probable transcriptional regulatory protein Mlut_12910 (253 aa).

The protein belongs to the TACO1 family.

It is found in the cytoplasm. This is Probable transcriptional regulatory protein Mlut_12910 from Micrococcus luteus (strain ATCC 4698 / DSM 20030 / JCM 1464 / CCM 169 / CCUG 5858 / IAM 1056 / NBRC 3333 / NCIMB 9278 / NCTC 2665 / VKM Ac-2230) (Micrococcus lysodeikticus).